The following is a 350-amino-acid chain: MALVTTTPTVNDEPLFAEVDMASYFTSTTVRATVVQASTIFYDTPATLDKAERLLVQAASYGAQIVVFPEAFIGGYPRGSNFGVSIGNRTAKGKEEFRKYHSAAIDVPGPEVDRLSAMAGKYKVYLVMGVIERDGYTLYCTVLFFDSQGRYLGKHRKVMPTALERIIWGFGDGSTIPVFQTPIGKIGAAICWENKMPLLRTAMYAKGVEIYCAPTADSRDLWQASTTHIALEGGCFVLSANQFCRRKDYPPPPEYVFSGTEEDLTPDSVVSAGGSVIISPSGAVLAGPNYEGEALISADLDLGEIARAKFDFDVVGHYSRSEVLSLIVKDHPTNPVTFTSTSTKIEDQTK.

Residues 30 to 302 (VRATVVQAST…EALISADLDL (273 aa)) form the CN hydrolase domain. Catalysis depends on E70, which acts as the Proton acceptor. The active site involves K157. The Nucleophile role is filled by C191.

It belongs to the carbon-nitrogen hydrolase superfamily. Nitrilase family. In terms of tissue distribution, highly expressed in leaves and cotyledons, lower expression in stems and roots.

It catalyses the reaction L-asparagine = 3-cyano-L-alanine + H2O. The catalysed reaction is 3-cyano-L-alanine + 2 H2O = L-aspartate + NH4(+). Functionally, involved in the cyanide detoxification pathway. Has nitrilase and nitrile-hydratase activity in the ratio 3.3:1, producing both asparagine and aspartic acid from beta-cyano-L-alanine (Ala(CN)). Can also use 3-phenylpropionitrile as substrate, but not indole-3-acetonitrile. This is Bifunctional nitrilase/nitrile hydratase NIT4B (NIT4B) from Lupinus angustifolius (Narrow-leaved blue lupine).